The primary structure comprises 94 residues: C-C motif chemokine 26 (94 aa).

Positions 1–23 (MMGLSLASAVLLASLLSLHLGTA) are cleaved as a signal peptide. 2 cysteine pairs are disulfide-bonded: cysteine 33/cysteine 57 and cysteine 34/cysteine 73.

This sequence belongs to the intercrine beta (chemokine CC) family. As to quaternary structure, monomer. Ubiquitously expressed at low levels in various tissues including heart and ovary.

The protein resides in the secreted. Chemoattractant for eosinophils and basophils. Acts as a ligand for C-C chemokine receptor CCR3 which triggers Ca(2+) mobilization in eosinophils. Also acts as a ligand for CX3C chemokine receptor CX3CR1, inducing cell chemotaxis. In Homo sapiens (Human), this protein is C-C motif chemokine 26.